We begin with the raw amino-acid sequence, 226 residues long: Phosphoribosylformylglycinamidine synthase subunit PurQ (226 aa).

The Glutamine amidotransferase type-1 domain occupies 2-225 (RFGIVVFPGS…MHYLEGGKNN (224 aa)). Cys86 (nucleophile) is an active-site residue. Catalysis depends on residues His194 and Glu196.

As to quaternary structure, part of the FGAM synthase complex composed of 1 PurL, 1 PurQ and 2 PurS subunits.

Its subcellular location is the cytoplasm. It catalyses the reaction N(2)-formyl-N(1)-(5-phospho-beta-D-ribosyl)glycinamide + L-glutamine + ATP + H2O = 2-formamido-N(1)-(5-O-phospho-beta-D-ribosyl)acetamidine + L-glutamate + ADP + phosphate + H(+). The catalysed reaction is L-glutamine + H2O = L-glutamate + NH4(+). It functions in the pathway purine metabolism; IMP biosynthesis via de novo pathway; 5-amino-1-(5-phospho-D-ribosyl)imidazole from N(2)-formyl-N(1)-(5-phospho-D-ribosyl)glycinamide: step 1/2. Its function is as follows. Part of the phosphoribosylformylglycinamidine synthase complex involved in the purines biosynthetic pathway. Catalyzes the ATP-dependent conversion of formylglycinamide ribonucleotide (FGAR) and glutamine to yield formylglycinamidine ribonucleotide (FGAM) and glutamate. The FGAM synthase complex is composed of three subunits. PurQ produces an ammonia molecule by converting glutamine to glutamate. PurL transfers the ammonia molecule to FGAR to form FGAM in an ATP-dependent manner. PurS interacts with PurQ and PurL and is thought to assist in the transfer of the ammonia molecule from PurQ to PurL. This Alkaliphilus metalliredigens (strain QYMF) protein is Phosphoribosylformylglycinamidine synthase subunit PurQ.